The sequence spans 76 residues: Horsegram inhibitor 1 (76 aa).

7 disulfide bridges follow: Cys16/Cys70, Cys17/Cys32, Cys20/Cys66, Cys22/Cys30, Cys40/Cys47, Cys44/Cys59, and Cys49/Cys57.

The protein belongs to the Bowman-Birk serine protease inhibitor family. In terms of assembly, HGI-III exists in a state of equilibrium between monomer, homodimer and trimer, with homodimer being the predominant form. The homodimer is stabilized by the non-covalent interaction between Lys-24 of one subunit and Asp-76 of the other subunit. The homodimer is more thermostable than the monomer. HGGI-I, HGGI-II and HGGI-III exist as monomers. Post-translationally, HGGI-I, HGGI-II and HGGI-III are produced by proteolysis of the N- and C-termini of HGI-III.

In terms of biological role, inhibitors of trypsin and chymotrypsin. HGGI-III has a higher activity than HGGI-I or HGGI-II. This is Horsegram inhibitor 1 from Vigna unguiculata subsp. cylindrica (Horse gram).